A 645-amino-acid polypeptide reads, in one-letter code: Transcription termination factor FttA (645 aa).

Residues 10–77 (APSNQNIMAT…IIVRIDESVR (68 aa)) are KHa. Positions 78-146 (KKEEDARKML…WTLRIRKATT (69 aa)) are KHb. Positions 187 to 391 (EISLTALGGF…LLIESTYGAK (205 aa)) are metallo-beta-lactamase N-terminus. Zn(2+) contacts are provided by histidine 250, histidine 252, aspartate 254, histidine 255, histidine 337, and aspartate 360. Residues 392-586 (EDIQPTRQEV…CRMEKLDGFS (195 aa)) are beta-Casp. Positions 587 to 645 (GHSDYNQLTGFVQKLRPKLRRVLVNHGERRKSENLALAVRRMFRIPAHYPQIQESIKLF) are metallo-beta-lactamase C-terminus. Histidine 612 is a binding site for Zn(2+).

Belongs to the metallo-beta-lactamase superfamily. RNA-metabolizing metallo-beta-lactamase-like family. FttA subfamily. Homodimer. Interacts with RNA polymerase (RNAP), interacts with the Spt4-Spt5 complex. It depends on Zn(2+) as a cofactor.

Functionally, terminates transcription on the whole genome. Termination is linked to FttA-mediated RNA cleavage and does not require NTP hydrolysis. Cleaves endonucleolytically at the RNA exit channel of RNA polymerase (RNAP); the 5'-3' exonuclease activity of this protein degrades the nascent RNA released from RNAP. Its function is as follows. Terminates transcription genome-wide in M.maripaludis. Restores wild-type growth to a strain of Methanococcus maripaludis depleted for this gene at 22 degrees Celsius and prevents transcriptional read-through. Transcription termination is most effective in vivo on RNAs with more than one U4-tract in their 3'-ends. Has endonuclease activity after U-rich tracts in transcription termination sequences. The protein is Transcription termination factor FttA of Cenarchaeum symbiosum (strain A).